A 188-amino-acid polypeptide reads, in one-letter code: dCTP deaminase (188 aa).

Residues 111–116 (KSTYAR), 135–137 (TLE), glutamine 156, tyrosine 170, and glutamine 180 each bind dCTP. Catalysis depends on glutamate 137, which acts as the Proton donor/acceptor.

This sequence belongs to the dCTP deaminase family. As to quaternary structure, homotrimer.

It catalyses the reaction dCTP + H2O + H(+) = dUTP + NH4(+). It participates in pyrimidine metabolism; dUMP biosynthesis; dUMP from dCTP (dUTP route): step 1/2. In terms of biological role, catalyzes the deamination of dCTP to dUTP. This is dCTP deaminase from Pseudomonas fluorescens (strain Pf0-1).